A 473-amino-acid chain; its full sequence is Bifunctional protein HldE (473 aa).

The interval 1-316 (MILPDFSLAR…AIAIHGQRAP (316 aa)) is ribokinase. An ATP-binding site is contributed by 193–196 (NLSE). Asp-262 is an active-site residue. Residues 342–473 (VTNGCFDLLH…TRIIEAIRNG (132 aa)) are cytidylyltransferase.

This sequence in the N-terminal section; belongs to the carbohydrate kinase PfkB family. It in the C-terminal section; belongs to the cytidylyltransferase family. In terms of assembly, homodimer.

It carries out the reaction D-glycero-beta-D-manno-heptose 7-phosphate + ATP = D-glycero-beta-D-manno-heptose 1,7-bisphosphate + ADP + H(+). The enzyme catalyses D-glycero-beta-D-manno-heptose 1-phosphate + ATP + H(+) = ADP-D-glycero-beta-D-manno-heptose + diphosphate. The protein operates within nucleotide-sugar biosynthesis; ADP-L-glycero-beta-D-manno-heptose biosynthesis; ADP-L-glycero-beta-D-manno-heptose from D-glycero-beta-D-manno-heptose 7-phosphate: step 1/4. Its pathway is nucleotide-sugar biosynthesis; ADP-L-glycero-beta-D-manno-heptose biosynthesis; ADP-L-glycero-beta-D-manno-heptose from D-glycero-beta-D-manno-heptose 7-phosphate: step 3/4. Functionally, catalyzes the phosphorylation of D-glycero-D-manno-heptose 7-phosphate at the C-1 position to selectively form D-glycero-beta-D-manno-heptose-1,7-bisphosphate. In terms of biological role, catalyzes the ADP transfer from ATP to D-glycero-beta-D-manno-heptose 1-phosphate, yielding ADP-D-glycero-beta-D-manno-heptose. This chain is Bifunctional protein HldE, found in Methylococcus capsulatus (strain ATCC 33009 / NCIMB 11132 / Bath).